The chain runs to 251 residues: Small ribosomal subunit protein uS4c (251 aa).

S4 RNA-binding domains are found at residues 110 to 170 (MRLD…KLVN) and 189 to 251 (RTLA…QFSE).

The protein belongs to the universal ribosomal protein uS4 family. As to quaternary structure, part of the 30S ribosomal subunit. Contacts protein S5. The interaction surface between S4 and S5 is involved in control of translational fidelity.

It localises to the plastid. Its subcellular location is the chloroplast. In terms of biological role, one of the primary rRNA binding proteins, it binds directly to 16S rRNA where it nucleates assembly of the body of the 30S subunit. Its function is as follows. With S5 and S12 plays an important role in translational accuracy. This is Small ribosomal subunit protein uS4c (rps4) from Tetradesmus obliquus (Green alga).